The chain runs to 892 residues: Iodate reductase subunit IdrA (892 aa).

[3Fe-4S] cluster contacts are provided by Cys-27, Cys-30, and Cys-34. Positions 431-442 (RGGGHQRGGLSA) are enriched in gly residues. The tract at residues 431 to 452 (RGGGHQRGGLSAGGNSEWLSPE) is disordered.

It belongs to the prokaryotic molybdopterin-containing oxidoreductase family. The iodate reductase (Idr) complex is composed of a molybdopterin-dependent iodate reductase (IdrA and IdrB subunits) and two associated peroxidases (IdrP1 and IdrP2). Requires [3Fe-4S] cluster as cofactor. Mo-bis(molybdopterin guanine dinucleotide) serves as cofactor.

The protein resides in the periplasm. Functionally, involved in iodate respiration. Probably catalyzes the reduction of iodate (IO(3)(-)) to hypoiodous acid (HIO) and H(2)O(2), using a reduced cytochrome c as the electron donor. In Pseudomonas sp. (strain SCT), this protein is Iodate reductase subunit IdrA.